Consider the following 233-residue polypeptide: Short chain dehydrogenase trt9 (233 aa).

NADP(+)-binding residues include D33, R95, Y127, K131, and V160. Residue Y127 is the Proton donor of the active site. The Lowers pKa of active site Tyr role is filled by K131.

This sequence belongs to the short-chain dehydrogenases/reductases (SDR) family.

It participates in secondary metabolite biosynthesis; terpenoid biosynthesis. In terms of biological role, short chain dehydrogenase; part of the gene cluster that mediates the biosynthesis of terretonin, a fungal meroterpenoid that acts as a mycotoxin. The first step of the pathway is the synthesis of 3,5-dimethylorsellinic acid (DMOA) by the polyketide synthase trt4. DMOA is then prenylated into farnesyl-DMOA by the polyprenyl transferase trt2. Methylation by the methyltransferase trt5 then leads to farnesyl-DMOA methyl ester which is further subject to epoxidation by the FAD-dependent monooxygenase trt8 to yield epoxyfarnesyl-DMOA methyl ester. Cyclization of epoxyfarnesyl-DMOA methyl ester by the terpene cyclase trt1 leads to a tetracycle intermediate which is in turn converted to preterretonin. Dehydrogenase trt9 comes next to transform preterretonin to preterrenoid. The FAD-dependent monooxygenase trt3 is then required for the C-hydroxylation at C16 of preterrenoid to yield terrenoid. The cytochrome P450 trt6 catalyzes three successive oxidations to transform terrenoid into an unstable intermediate, which then undergoes the D-ring expansion and unusual rearrangement of the methoxy group to afford the core skeleton of terretonin. Trt14 catalyzes the D-ring expansion of terretonin involving intramolecular methoxy rearrangement as well as the hydrolysis of the expanded D-ring and the methyl ester moiety. Finally, the nonheme iron-dependent dioxygenase trt7 accomplishes the last two oxidation reactions steps to complete the biosynthesis of terretonin. Terretonin C is produced via spontaneous decarboxylation of the terretonin precursor. Another shunt product of the terretonin biosynthesis is dihydrofarnesyl-DMOA, derived from epoxyfarnesyl-DMOA through hydrolysis of the epoxide. This Aspergillus terreus (strain NIH 2624 / FGSC A1156) protein is Short chain dehydrogenase trt9.